Here is a 140-residue protein sequence, read N- to C-terminus: Transcription antitermination protein NusB (140 aa).

This sequence belongs to the NusB family.

Involved in transcription antitermination. Required for transcription of ribosomal RNA (rRNA) genes. Binds specifically to the boxA antiterminator sequence of the ribosomal RNA (rrn) operons. In Myxococcus xanthus (strain DK1622), this protein is Transcription antitermination protein NusB.